The sequence spans 178 residues: MSELTTLARPYAKAVFEVAQGAGDLARWSDQLGFMAAVVHDPTMKAFLDSPKLTREAAADTVIGVCEGRIDDQGKNFVRLLAENGRLTLLPEIAAIYEVMRAEAEGKVEALVVSAQPVSDAQKSAIAQSLAKRLGREVELVCEVDESLIGGAVIRAGDLVIDGSVRGRLERMAANLSR.

It belongs to the ATPase delta chain family. As to quaternary structure, F-type ATPases have 2 components, F(1) - the catalytic core - and F(0) - the membrane proton channel. F(1) has five subunits: alpha(3), beta(3), gamma(1), delta(1), epsilon(1). F(0) has three main subunits: a(1), b(2) and c(10-14). The alpha and beta chains form an alternating ring which encloses part of the gamma chain. F(1) is attached to F(0) by a central stalk formed by the gamma and epsilon chains, while a peripheral stalk is formed by the delta and b chains.

Its subcellular location is the cell inner membrane. Functionally, f(1)F(0) ATP synthase produces ATP from ADP in the presence of a proton or sodium gradient. F-type ATPases consist of two structural domains, F(1) containing the extramembraneous catalytic core and F(0) containing the membrane proton channel, linked together by a central stalk and a peripheral stalk. During catalysis, ATP synthesis in the catalytic domain of F(1) is coupled via a rotary mechanism of the central stalk subunits to proton translocation. Its function is as follows. This protein is part of the stalk that links CF(0) to CF(1). It either transmits conformational changes from CF(0) to CF(1) or is implicated in proton conduction. The protein is ATP synthase subunit delta of Thioalkalivibrio sulfidiphilus (strain HL-EbGR7).